We begin with the raw amino-acid sequence, 462 residues long: Glutamate--tRNA ligase 2 (462 aa).

The 'HIGH' region motif lies at Pro8–Gly18. A 'KMSKS' region motif is present at residues Pro227–Arg231. Lys230 contributes to the ATP binding site.

This sequence belongs to the class-I aminoacyl-tRNA synthetase family. Glutamate--tRNA ligase type 1 subfamily. As to quaternary structure, monomer.

The protein localises to the cytoplasm. It catalyses the reaction tRNA(Glu) + L-glutamate + ATP = L-glutamyl-tRNA(Glu) + AMP + diphosphate. Functionally, catalyzes the attachment of glutamate to tRNA(Glu) in a two-step reaction: glutamate is first activated by ATP to form Glu-AMP and then transferred to the acceptor end of tRNA(Glu). The protein is Glutamate--tRNA ligase 2 of Thermosipho melanesiensis (strain DSM 12029 / CIP 104789 / BI429).